A 189-amino-acid chain; its full sequence is Protein CURLY FLAG LEAF 1 (189 aa).

An EAR motif is present at residues 50–55; sequence TLELNS. One can recognise a WW domain in the interval 57-91; it reads LSLPCHWEQCLDLKTGEIYYINWKNGMRVKEDPRK. The disordered stretch occupies residues 90-148; that stretch reads RKVMNADPDSGDSYGTVCSEEDSSYYDSEESSSESSPSSRENHKEEEEEEEEEEEEEED. Composition is skewed to acidic residues over residues 108–121 and 135–148; these read SEED…EESS and EEEE…EEED.

As to quaternary structure, interacts with BHLH122/CFLAP1 and BHLH80/CFLAP2. Binds to HDG1. Mostly observed in roots, flowers and siliques. Expressed in cells differentiated from epidermal cells such as trichomes, stigmatic papillar cells and guard cells, as well as in tissues undergoing abscission and dehiscence.

Functionally, negatively regulates the cuticle development by interacting with the HD-ZIP IV transcription factor HDG1. In Arabidopsis thaliana (Mouse-ear cress), this protein is Protein CURLY FLAG LEAF 1.